The sequence spans 190 residues: Lipid A acyltransferase PagP (190 aa).

A signal peptide spans 1–18 (MKRLISCLTIICALNASA). Catalysis depends on residues histidine 60, aspartate 103, and serine 104.

This sequence belongs to the lipid A palmitoyltransferase family. In terms of assembly, homodimer.

Its subcellular location is the cell outer membrane. The catalysed reaction is a lipid A + a 1,2-diacyl-sn-glycero-3-phosphocholine = a hepta-acyl lipid A + a 2-acyl-sn-glycero-3-phosphocholine. It catalyses the reaction a lipid IVA + a 1,2-diacyl-sn-glycero-3-phosphocholine = a lipid IVB + a 2-acyl-sn-glycero-3-phosphocholine. The enzyme catalyses a lipid IIA + a 1,2-diacyl-sn-glycero-3-phosphocholine = a lipid IIB + a 2-acyl-sn-glycero-3-phosphocholine. Transfers a fatty acid residue from the sn-1 position of a phospholipid to the N-linked hydroxyfatty acid chain on the proximal unit of lipid A or its precursors. The chain is Lipid A acyltransferase PagP from Legionella pneumophila (strain Paris).